Consider the following 365-residue polypeptide: Fatty acid hydroxylase vlmA (365 aa).

The tract at residues 20–41 is disordered; sequence TTIKRRQNDKTKTPKTKPVSKI. An N-linked (GlcNAc...) asparagine glycan is attached at N47. 4 consecutive transmembrane segments (helical) span residues 62 to 82, 89 to 109, 144 to 164, and 179 to 199; these read ILLQ…VLSI, VHPF…FRFL, LNWS…LVAY, and WWAW…FYYY. Residues 189–335 enclose the Fatty acid hydroxylase domain; that stretch reads LYPIILDFYY…TRIWDRLFGT (147 aa).

It belongs to the sterol desaturase family. TMEM195 subfamily.

The protein resides in the membrane. The protein operates within secondary metabolite biosynthesis. Its function is as follows. Fatty acid hydroxylase; part of the gene cluster that mediates the biosynthesis of verlamelin, a lipopeptide that exhibits antifungal activity against plant pathogenic fungi. Verlamelin is a cyclic hexadepsipeptide and is bridged by ester bonding between a 5-hydroxytetradecanoic acid moiety and a carboxyl group on the terminal Val of amide-bonded tetradecanoyl-hexapeptide D-allo-Thr-D-Ala-L-Pro-L-Gln-D-Tyr-L-Val. VlmA and vlmB are altogether regarded as essential components in the biosynthesis of 5-hydroxytetradecanoic acid. VlmA catalyzes the hydroxylation at position C5 of tetradecanoic acid produced in primary metabolism, while the precise function of vlmB still remains to be solved. To be loaded onto the waiting NRPS, 5-hydroxytetradecanoic acid is activated in the form of acyladenylate by the AMP-dependent ligase vlmC. VlmS seems to accept the fatty-acyl intermediate onto the initial module to further elongate amino acid residues by the downstream modules. In addition, in the last module at its C-terminus, vlmS contains a surplus condensation (C) domain that may be involved in cyclization, the last step to form verlamelin. The chain is Fatty acid hydroxylase vlmA from Lecanicillium sp.